We begin with the raw amino-acid sequence, 294 residues long: Osteopontin (294 aa).

An N-terminal signal peptide occupies residues 1–16; that stretch reads MRLAVICFCLFGIASS. Phosphoserine is present on residues Ser-24, Ser-26, Ser-27, Ser-61, Ser-62, Ser-75, Ser-77, Ser-80, Ser-106, Ser-109, Ser-112, Ser-115, and Ser-118. Residues 42-274 are disordered; the sequence is WLVPDPSQKQ…LVLDPKSKED (233 aa). Positions 48–61 are enriched in polar residues; sequence SQKQNLLAPQNAVS. The span at 85-110 shows a compositional bias: acidic residues; the sequence is DDDDDDDDDDGDHAESEDSVDSDESD. Positions 121-130 are enriched in polar residues; sequence TVTASTQADT. Residues Thr-123, Thr-132, and Thr-137 are each glycosylated (O-linked (GalNAc...) threonine). The Cell attachment site motif lies at 144–146; sequence RGD. 2 positions are modified to phosphothreonine: Thr-170 and Thr-175. A compositionally biased stretch (basic and acidic residues) spans 174–187; the sequence is LTSHMKSGESKESL. 6 positions are modified to phosphoserine: Ser-176, Ser-180, Ser-200, Ser-209, Ser-213, and Ser-219. A compositionally biased stretch (polar residues) spans 197–216; sequence SMPSDQDNNGKGSHESSQLD. A glycan (O-linked (Xyl...) (chondroitin sulfate) serine) is linked at Ser-219. Residues 220–232 show a composition bias toward basic and acidic residues; sequence LETHRLEHSKESQ. Thr-222 carries the phosphothreonine modification. Ser-228, Ser-231, Ser-234, Ser-238, Ser-243, Ser-247, Ser-250, Ser-255, Ser-260, Ser-271, Ser-283, Ser-288, Ser-290, and Ser-291 each carry phosphoserine. The span at 234–249 shows a compositional bias: polar residues; that stretch reads SADQSDVIDSQASSKA. The segment covering 263–274 has biased composition (basic and acidic residues); it reads DKLVLDPKSKED. O-linked (Xyl...) (chondroitin sulfate) serine glycosylation is present at Ser-288.

The protein belongs to the osteopontin family. Interacts (via N-terminus) with integrin ITGA9:ITGB1. Post-translationally, extensively phosphorylated by FAM20C in the extracellular medium at multiple sites within the S-x-E/pS motif. The phosphorylated form inhibits hydroxyapatite crystallization. Dephosphorylation via a mechanism involving ALPL/TNAP promotes hydroxyapatite crystallization. In terms of processing, O-glycosylated. Forms covalent cross-links mediated by transglutaminase TGM2, between a glutamine and the epsilon-amino group of a lysine residue, forming homopolymers and heteropolymers, increasing its collagen binding properties.

It is found in the secreted. Functionally, major non-collagenous bone protein that binds tightly to hydroxyapatite. Appears to form an integral part of the mineralized matrix. Probably important to cell-matrix interaction. In terms of biological role, acts as a cytokine involved in enhancing production of interferon-gamma and interleukin-12 and reducing production of interleukin-10 and is essential in the pathway that leads to type I immunity. In Mus musculus (Mouse), this protein is Osteopontin (Spp1).